The chain runs to 670 residues: DNA ligase (670 aa).

NAD(+)-binding positions include 35–39 (DSVYD), 84–85 (SL), and glutamate 116. Catalysis depends on lysine 118, which acts as the N6-AMP-lysine intermediate. Positions 139, 176, 293, and 317 each coordinate NAD(+). Residues cysteine 411, cysteine 414, cysteine 429, and cysteine 435 each contribute to the Zn(2+) site. The BRCT domain maps to 592–670 (VVKSEIAGKT…EEAFLKLLKS (79 aa)).

Belongs to the NAD-dependent DNA ligase family. LigA subfamily. Mg(2+) serves as cofactor. The cofactor is Mn(2+).

It catalyses the reaction NAD(+) + (deoxyribonucleotide)n-3'-hydroxyl + 5'-phospho-(deoxyribonucleotide)m = (deoxyribonucleotide)n+m + AMP + beta-nicotinamide D-nucleotide.. Functionally, DNA ligase that catalyzes the formation of phosphodiester linkages between 5'-phosphoryl and 3'-hydroxyl groups in double-stranded DNA using NAD as a coenzyme and as the energy source for the reaction. It is essential for DNA replication and repair of damaged DNA. This is DNA ligase from Coxiella burnetii (strain Dugway 5J108-111).